A 253-amino-acid chain; its full sequence is uncharacterized protein (253 aa).

It belongs to the NAD(P)-dependent epimerase/dehydratase family.

This is an uncharacterized protein from Bacillus subtilis (strain 168).